The chain runs to 298 residues: Tyrosine recombinase XerC (298 aa).

Residues Met-1–Asn-85 enclose the Core-binding (CB) domain. Residues Arg-106 to Asp-285 form the Tyr recombinase domain. Active-site residues include Arg-146, Lys-170, His-237, Arg-240, and His-263. The O-(3'-phospho-DNA)-tyrosine intermediate role is filled by Tyr-272.

This sequence belongs to the 'phage' integrase family. XerC subfamily. In terms of assembly, forms a cyclic heterotetrameric complex composed of two molecules of XerC and two molecules of XerD.

The protein resides in the cytoplasm. Site-specific tyrosine recombinase, which acts by catalyzing the cutting and rejoining of the recombining DNA molecules. The XerC-XerD complex is essential to convert dimers of the bacterial chromosome into monomers to permit their segregation at cell division. It also contributes to the segregational stability of plasmids. The protein is Tyrosine recombinase XerC of Pseudomonas fluorescens (strain ATCC BAA-477 / NRRL B-23932 / Pf-5).